We begin with the raw amino-acid sequence, 213 residues long: Nucleoside triphosphate pyrophosphatase (213 aa).

Asp79 acts as the Proton acceptor in catalysis.

Belongs to the Maf family. The cofactor is a divalent metal cation.

The protein localises to the cytoplasm. The catalysed reaction is a ribonucleoside 5'-triphosphate + H2O = a ribonucleoside 5'-phosphate + diphosphate + H(+). The enzyme catalyses a 2'-deoxyribonucleoside 5'-triphosphate + H2O = a 2'-deoxyribonucleoside 5'-phosphate + diphosphate + H(+). Its function is as follows. Nucleoside triphosphate pyrophosphatase. May have a dual role in cell division arrest and in preventing the incorporation of modified nucleotides into cellular nucleic acids. The sequence is that of Nucleoside triphosphate pyrophosphatase from Rhodococcus erythropolis (strain PR4 / NBRC 100887).